Consider the following 456-residue polypeptide: Bifunctional protein GlmU (456 aa).

Residues 1 to 229 (MLNSAMSVVI…ISETDGVNNR (229 aa)) form a pyrophosphorylase region. Residues 11-14 (LAAG), lysine 25, glutamine 76, 81-82 (GT), 103-105 (YGD), glycine 140, glutamate 154, asparagine 169, and asparagine 227 each bind UDP-N-acetyl-alpha-D-glucosamine. Aspartate 105 provides a ligand contact to Mg(2+). A Mg(2+)-binding site is contributed by asparagine 227. The linker stretch occupies residues 230 to 250 (LQLSRLERIYQAEQAEKLLLS). The interval 251–456 (GVMLRDPARF…QGWQRPVKKK (206 aa)) is N-acetyltransferase. Residues arginine 333 and lysine 351 each coordinate UDP-N-acetyl-alpha-D-glucosamine. Histidine 363 serves as the catalytic Proton acceptor. UDP-N-acetyl-alpha-D-glucosamine is bound by residues tyrosine 366 and asparagine 377. Acetyl-CoA-binding positions include alanine 380, 386 to 387 (NY), serine 405, alanine 423, and arginine 440.

In the N-terminal section; belongs to the N-acetylglucosamine-1-phosphate uridyltransferase family. This sequence in the C-terminal section; belongs to the transferase hexapeptide repeat family. In terms of assembly, homotrimer. Mg(2+) serves as cofactor.

Its subcellular location is the cytoplasm. The catalysed reaction is alpha-D-glucosamine 1-phosphate + acetyl-CoA = N-acetyl-alpha-D-glucosamine 1-phosphate + CoA + H(+). It carries out the reaction N-acetyl-alpha-D-glucosamine 1-phosphate + UTP + H(+) = UDP-N-acetyl-alpha-D-glucosamine + diphosphate. Its pathway is nucleotide-sugar biosynthesis; UDP-N-acetyl-alpha-D-glucosamine biosynthesis; N-acetyl-alpha-D-glucosamine 1-phosphate from alpha-D-glucosamine 6-phosphate (route II): step 2/2. It participates in nucleotide-sugar biosynthesis; UDP-N-acetyl-alpha-D-glucosamine biosynthesis; UDP-N-acetyl-alpha-D-glucosamine from N-acetyl-alpha-D-glucosamine 1-phosphate: step 1/1. The protein operates within bacterial outer membrane biogenesis; LPS lipid A biosynthesis. In terms of biological role, catalyzes the last two sequential reactions in the de novo biosynthetic pathway for UDP-N-acetylglucosamine (UDP-GlcNAc). The C-terminal domain catalyzes the transfer of acetyl group from acetyl coenzyme A to glucosamine-1-phosphate (GlcN-1-P) to produce N-acetylglucosamine-1-phosphate (GlcNAc-1-P), which is converted into UDP-GlcNAc by the transfer of uridine 5-monophosphate (from uridine 5-triphosphate), a reaction catalyzed by the N-terminal domain. The chain is Bifunctional protein GlmU from Salmonella schwarzengrund (strain CVM19633).